Reading from the N-terminus, the 171-residue chain is uncharacterized protein (171 aa).

Positions 33 to 166 (AISIATNLYR…LTGLLRKVAD (134 aa)) constitute an HTH marR-type domain. Positions 80–103 (TRKIAELSGISTATASNVIKTLEK) form a DNA-binding region, H-T-H motif.

This is an uncharacterized protein from Bacillus subtilis (strain 168).